Reading from the N-terminus, the 396-residue chain is S-adenosylmethionine synthase (396 aa).

Residue His-16 participates in ATP binding. Asp-18 is a Mg(2+) binding site. Residue Glu-44 coordinates K(+). L-methionine is bound by residues Glu-57 and Gln-100. Residues 100–110 form a flexible loop region; the sequence is QSQDIARGVDN. ATP is bound by residues 162 to 164, Asp-237, 243 to 244, Ala-260, and Lys-264; these read DGK and RK. Asp-237 is a binding site for L-methionine. Lys-268 provides a ligand contact to L-methionine.

It belongs to the AdoMet synthase family. As to quaternary structure, homotetramer; dimer of dimers. It depends on Mg(2+) as a cofactor. Requires K(+) as cofactor.

It is found in the cytoplasm. The enzyme catalyses L-methionine + ATP + H2O = S-adenosyl-L-methionine + phosphate + diphosphate. It functions in the pathway amino-acid biosynthesis; S-adenosyl-L-methionine biosynthesis; S-adenosyl-L-methionine from L-methionine: step 1/1. In terms of biological role, catalyzes the formation of S-adenosylmethionine (AdoMet) from methionine and ATP. The overall synthetic reaction is composed of two sequential steps, AdoMet formation and the subsequent tripolyphosphate hydrolysis which occurs prior to release of AdoMet from the enzyme. This Myxococcus xanthus protein is S-adenosylmethionine synthase.